The chain runs to 136 residues: Nodulation protein K (136 aa).

In Bradyrhizobium sp. (strain ANU 289), this protein is Nodulation protein K (nodK).